Consider the following 170-residue polypeptide: UPF0690 protein C1orf52 homolog (170 aa).

Disordered stretches follow at residues 1–56 (MAAE…PDEL) and 124–170 (SNVY…KRKV). Residues 46 to 56 (DTKKLPGPDEL) show a composition bias toward basic and acidic residues. Residues 144 to 159 (EEEEAREDSPPSDDEQ) are compositionally biased toward acidic residues.

This sequence belongs to the UPF0690 family.

The polypeptide is UPF0690 protein C1orf52 homolog (Xenopus tropicalis (Western clawed frog)).